Reading from the N-terminus, the 186-residue chain is Translation initiation factor IF-3 (186 aa).

Positions 1–20 (MINRSAGKDRDRSRSGDKEL) are disordered.

This sequence belongs to the IF-3 family. In terms of assembly, monomer.

It is found in the cytoplasm. Functionally, IF-3 binds to the 30S ribosomal subunit and shifts the equilibrium between 70S ribosomes and their 50S and 30S subunits in favor of the free subunits, thus enhancing the availability of 30S subunits on which protein synthesis initiation begins. The protein is Translation initiation factor IF-3 of Borrelia hermsii (strain HS1 / DAH).